We begin with the raw amino-acid sequence, 347 residues long: Ubiquinone biosynthesis protein coq-4, mitochondrial (347 aa).

A mitochondrion-targeting transit peptide spans 1-49 (MEVTALRRSAALVARASSQNAIRPAVCAAISSTSPTPPTQIQTQQTRQF). 4 residues coordinate Zn(2+): histidine 185, aspartate 186, histidine 189, and glutamate 201. Residues 284–310 (IRKREREEKRRRKEMERMLSGRGTEDV) are disordered.

This sequence belongs to the COQ4 family. As to quaternary structure, component of a multi-subunit COQ enzyme complex, composed of at least coq-3, coq-4, coq-5, coq-6, coq-7 and coq-9. The cofactor is Zn(2+).

Its subcellular location is the mitochondrion inner membrane. It catalyses the reaction a 4-hydroxy-3-methoxy-5-(all-trans-polyprenyl)benzoate + H(+) = a 2-methoxy-6-(all-trans-polyprenyl)phenol + CO2. Its pathway is cofactor biosynthesis; ubiquinone biosynthesis. Functionally, lyase that catalyzes the C1-decarboxylation of 4-hydroxy-3-methoxy-5-(all-trans-polyprenyl)benzoic acid into 2-methoxy-6-(all-trans-polyprenyl)phenol during ubiquinone biosynthesis. The chain is Ubiquinone biosynthesis protein coq-4, mitochondrial from Neurospora crassa (strain ATCC 24698 / 74-OR23-1A / CBS 708.71 / DSM 1257 / FGSC 987).